A 1320-amino-acid chain; its full sequence is Tetratricopeptide repeat protein 21A (1320 aa).

TPR repeat units lie at residues 4–38 (NDSSLMAGIIYYSQEKYFHHVQQAAAVGLEKFSND), 110–143 (GTALYYAGLFLWLIGRHDKAKEYIDRMLKISRGF), 146–180 (AYVLRGWVDLTSDKPHTAKKAIEYLEQGIQDTKDV), 181–213 (LGLMGKAMYFMMQQNYSEALEVVNQITVTSGSF), 215–247 (PALVLKMQLFLARQDWEQTVEMGHRILEKDESN), 334–367 (VHVATELGYLFILKNQVKEALLWYSEAMKLDKDG), 502–534 (IDPLYLMAQVRYYSELENAQSILQRCLELDPAS), 572–605 (PLYHLIKARALNKAGDYPEAIKTLKMVIKLPALK), 728–761 (PHTSLLLGDALMSILEPEKALEVYDEAYRQNPHD), 762–795 (ASLASRIGHAYVKAHQYTEAIEYYEAAQKINGQD), 797–828 (LCCDLGKLLLKLKKVNKAEKVLKQALEHDIVQ), 837–869 (VKCLLLLAKVYKSHKKEAVIETLNKALDLQSRI), 889–922 (ASICIQFAEHYLAEKEYDKAVQSYKDVFSYLPTD), 924–956 (KVMLELAQLYLLQGHLDLCEQHCAILLQTEQNH), 957–990 (ETASVLMADLMFRKQKHEAAINLYHQVLEKAPDN), 1028–1061 (PGFNYCRGIYCWHIGQPNEALKFLNKARKDSTWG), 1201–1234 (EKSWLLLADIYCQGSKFDLALELLRRCVQYNKSC), 1236–1268 (KAYEYMGFIMEKEQSYKDAVTNYKLAWKYSHHA), and 1270–1303 (PAIGFKLAFNYLKDKKFVEAIEICNDVLREHPDY).

It belongs to the TTC21 family. Interacts with IFT20. Interacts with IFT52. Interacts with IFT140. Interacts with CEP78; regulating IFT20 stability and localization. Strongly expressed in testis.

In terms of biological role, intraflagellar transport (IFT)-associated protein required for spermatogenesis. Required for sperm flagellar formation and intraflagellar transport. This chain is Tetratricopeptide repeat protein 21A, found in Homo sapiens (Human).